Reading from the N-terminus, the 172-residue chain is Large ribosomal subunit protein uL22y (172 aa).

It belongs to the universal ribosomal protein uL22 family.

The polypeptide is Large ribosomal subunit protein uL22y (Hordeum vulgare (Barley)).